The chain runs to 574 residues: Putative ABC transporter ATP-binding protein VVA0347 (574 aa).

ABC transporter domains follow at residues 3-244 (IEFS…GIRE) and 299-533 (LDVR…ANLT). Residues 37-44 (GPSGSGKS) and 332-339 (GKNGSGKS) each bind ATP.

Belongs to the ABC transporter superfamily.

It is found in the cell inner membrane. Functionally, probably part of an ABC transporter complex. Responsible for energy coupling to the transport system. The polypeptide is Putative ABC transporter ATP-binding protein VVA0347 (Vibrio vulnificus (strain YJ016)).